The following is a 317-amino-acid chain: Biotin synthase (317 aa).

A Radical SAM core domain is found at 42–260 (NRIQLSTLLS…IAVTRLCMPK (219 aa)). [4Fe-4S] cluster-binding residues include cysteine 57, cysteine 61, and cysteine 64. [2Fe-2S] cluster is bound by residues cysteine 101, cysteine 132, cysteine 192, and arginine 264.

Belongs to the radical SAM superfamily. Biotin synthase family. In terms of assembly, homodimer. It depends on [4Fe-4S] cluster as a cofactor. The cofactor is [2Fe-2S] cluster.

The catalysed reaction is (4R,5S)-dethiobiotin + (sulfur carrier)-SH + 2 reduced [2Fe-2S]-[ferredoxin] + 2 S-adenosyl-L-methionine = (sulfur carrier)-H + biotin + 2 5'-deoxyadenosine + 2 L-methionine + 2 oxidized [2Fe-2S]-[ferredoxin]. It participates in cofactor biosynthesis; biotin biosynthesis; biotin from 7,8-diaminononanoate: step 2/2. Functionally, catalyzes the conversion of dethiobiotin (DTB) to biotin by the insertion of a sulfur atom into dethiobiotin via a radical-based mechanism. This chain is Biotin synthase, found in Thiobacillus denitrificans (strain ATCC 25259 / T1).